A 137-amino-acid chain; its full sequence is Putative pre-16S rRNA nuclease (137 aa).

The protein belongs to the YqgF nuclease family.

Its subcellular location is the cytoplasm. In terms of biological role, could be a nuclease involved in processing of the 5'-end of pre-16S rRNA. This chain is Putative pre-16S rRNA nuclease, found in Actinobacillus pleuropneumoniae serotype 7 (strain AP76).